A 220-amino-acid polypeptide reads, in one-letter code: RNA-free ribonuclease P (220 aa).

This sequence belongs to the HARP family.

The enzyme catalyses Endonucleolytic cleavage of RNA, removing 5'-extranucleotides from tRNA precursor.. In terms of biological role, RNA-free RNase P that catalyzes the removal of the 5'-leader sequence from pre-tRNA to produce the mature 5'-terminus. The chain is RNA-free ribonuclease P from Methanothermobacter thermautotrophicus (strain ATCC 29096 / DSM 1053 / JCM 10044 / NBRC 100330 / Delta H) (Methanobacterium thermoautotrophicum).